Reading from the N-terminus, the 281-residue chain is 2-dehydro-3-deoxyphosphooctonate aldolase (281 aa).

It belongs to the KdsA family.

The protein localises to the cytoplasm. The catalysed reaction is D-arabinose 5-phosphate + phosphoenolpyruvate + H2O = 3-deoxy-alpha-D-manno-2-octulosonate-8-phosphate + phosphate. It participates in carbohydrate biosynthesis; 3-deoxy-D-manno-octulosonate biosynthesis; 3-deoxy-D-manno-octulosonate from D-ribulose 5-phosphate: step 2/3. The protein operates within bacterial outer membrane biogenesis; lipopolysaccharide biosynthesis. The sequence is that of 2-dehydro-3-deoxyphosphooctonate aldolase from Pseudomonas syringae pv. tomato (strain ATCC BAA-871 / DC3000).